We begin with the raw amino-acid sequence, 103 residues long: Large ribosomal subunit protein bL21 (103 aa).

The protein belongs to the bacterial ribosomal protein bL21 family. Part of the 50S ribosomal subunit. Contacts protein L20.

Functionally, this protein binds to 23S rRNA in the presence of protein L20. This Clostridium acetobutylicum (strain ATCC 824 / DSM 792 / JCM 1419 / IAM 19013 / LMG 5710 / NBRC 13948 / NRRL B-527 / VKM B-1787 / 2291 / W) protein is Large ribosomal subunit protein bL21.